A 467-amino-acid chain; its full sequence is Dimethylamine methyltransferase MtbB1 (467 aa).

O356 is a non-standard amino acid (pyrrolysine).

Belongs to the dimethylamine methyltransferase family.

It catalyses the reaction Co(I)-[dimethylamine-specific corrinoid protein] + dimethylamine + H(+) = methyl-Co(III)-[dimethylamine-specific corrinoid protein] + methylamine. It functions in the pathway one-carbon metabolism; methanogenesis from dimethylamine. Catalyzes the transfer of a methyl group from dimethylamine to the corrinoid cofactor of MtbC. This chain is Dimethylamine methyltransferase MtbB1 (mtbB1), found in Methanosarcina acetivorans (strain ATCC 35395 / DSM 2834 / JCM 12185 / C2A).